The sequence spans 309 residues: Taste receptor type 2 member 31 (309 aa).

The Extracellular segment spans residues 1-2; it reads MT. Residues 3-23 form a helical membrane-spanning segment; that stretch reads TFIPIIFSSVVVVLFVIGNFA. The Cytoplasmic portion of the chain corresponds to 24-55; sequence NGFIALVNSIERVKRQKISFADQILTALAVSR. Residues 56 to 76 form a helical membrane-spanning segment; that stretch reads VGLLWVLLLNWYSTVFNPAFY. The Extracellular segment spans residues 77–100; the sequence is SVEVRTTAYNVWAVTGHFSNWLAT. A helical transmembrane segment spans residues 101-121; the sequence is SLSIFYLLKIANFSNLIFLHL. Topologically, residues 122-126 are cytoplasmic; that stretch reads KRRVK. A helical transmembrane segment spans residues 127–147; it reads SVILVMLLGPLLFLACQLFVI. The Extracellular portion of the chain corresponds to 148–181; that stretch reads NMKEIVRTKEYEGNLTWKIKLRSAVYLSDATVTT. A glycan (N-linked (GlcNAc...) asparagine) is linked at Asn161. The helical transmembrane segment at 182 to 202 threads the bilayer; it reads LGNLVPFTLTLLCFLLLICSL. Topologically, residues 203-229 are cytoplasmic; that stretch reads CKHLKKMQLHGKGSQDPSTKVHIKALQ. A helical membrane pass occupies residues 230-250; that stretch reads TVIFFLLLCAVYFLSIMISVW. The Extracellular segment spans residues 251 to 259; that stretch reads SFGSLENKP. A helical membrane pass occupies residues 260 to 280; that stretch reads VFMFCKAIRFSYPSIHPFILI. The Cytoplasmic portion of the chain corresponds to 281 to 309; it reads WGNKKLKQTFLSVLRQVRYWVKGEKPSSP.

This sequence belongs to the G-protein coupled receptor T2R family. As to expression, expressed in subsets of taste receptor cells of the tongue and exclusively in gustducin-positive cells.

Its subcellular location is the membrane. Its function is as follows. Receptor that may play a role in the perception of bitterness and is gustducin-linked. May play a role in sensing the chemical composition of the gastrointestinal content. The activity of this receptor may stimulate alpha gustducin, mediate PLC-beta-2 activation and lead to the gating of TRPM5. Activated by the sulfonyl amide sweeteners saccharin and acesulfame K. In Homo sapiens (Human), this protein is Taste receptor type 2 member 31 (TAS2R31).